Reading from the N-terminus, the 433-residue chain is Serine/threonine-protein kinase toxin HipA (433 aa).

Position 147 is a phosphoserine; by autocatalysis (Ser-147). ATP-binding positions include Val-151–Lys-154, Lys-178, and Glu-220–Phe-222. The Proton acceptor role is filled by Asp-306. Residues His-308–Asn-311 and Tyr-327–Asp-328 each bind ATP. 2 consecutive DNA-binding regions follow at residues Arg-380–Arg-384 and Arg-429.

It belongs to the HipA Ser/Thr kinase family. In terms of assembly, monomer. Forms a HipA(2)HipB(2)-DNA complex with cognate antitoxin HipB; has higher affinity for the latter when HipB is prebound to DNA and HipA is phosphorylated. Binds DNA in the ternary complex.

The catalysed reaction is L-seryl-[protein] + ATP = O-phospho-L-seryl-[protein] + ADP + H(+). The enzyme catalyses L-threonyl-[protein] + ATP = O-phospho-L-threonyl-[protein] + ADP + H(+). In terms of biological role, toxic component of a type II toxin-antitoxin (TA) system; overexpression in wild-type temporarily inhibits cell growth, overexpression in a hipAB deletion leads to acute growth inhibition. The toxic effect of HipA is neutralized by its cognate antitoxin HipB. In the ternary phosphoserine-HipA-HipB-DNA complex the DNA is bent about 125 degrees; all HipA in the crystallized ternary complex is phosphorylated. In E.coli phosphorylation of HipA is thought to release HipB from the HipA-HipB-DNA complex, suggesting the complex functions differently in the 2 bacteria. Phosphorylates Glu-tRNA-ligase (GltX, on 'Ser-239') in vivo, with HipB probably acts as a corepressor for transcription of the hipBA promoter. This Shewanella oneidensis (strain ATCC 700550 / JCM 31522 / CIP 106686 / LMG 19005 / NCIMB 14063 / MR-1) protein is Serine/threonine-protein kinase toxin HipA.